Reading from the N-terminus, the 525-residue chain is PE-PGRS family protein PE_PGRS47 (525 aa).

Residues 1–93 (MSFVIAAPEF…AYSYASAEAA (93 aa)) enclose the PE domain. The tract at residues 506–525 (VGGAGGLLEGQNGENGLLPS) is disordered. Residues 514–525 (EGQNGENGLLPS) are compositionally biased toward low complexity.

This sequence belongs to the mycobacterial PE family. PGRS subfamily.

It is found in the secreted. Its subcellular location is the cell surface. The protein localises to the host cytoplasm. The protein resides in the host cytosol. Contributes to evasion of both innate and adaptive immunity. Inhibits autophagy in infected host phagocytes and inhibits major histocompatibility complex (MHC) class II antigen presentation by mycobacteria-infected dendritic cells. Has an important role in the growth and survival of M.tuberculosis, particularly during intracellular growth and in the later chronic phase of infection. The chain is PE-PGRS family protein PE_PGRS47 from Mycobacterium tuberculosis (strain ATCC 25618 / H37Rv).